A 121-amino-acid chain; its full sequence is Small ribosomal subunit protein uS13 (121 aa).

The segment at 94-121 (GLPLRGQRTRTNARTRKGPRRAAQSLKK) is disordered.

Belongs to the universal ribosomal protein uS13 family. As to quaternary structure, part of the 30S ribosomal subunit. Forms a loose heterodimer with protein S19. Forms two bridges to the 50S subunit in the 70S ribosome.

Functionally, located at the top of the head of the 30S subunit, it contacts several helices of the 16S rRNA. In the 70S ribosome it contacts the 23S rRNA (bridge B1a) and protein L5 of the 50S subunit (bridge B1b), connecting the 2 subunits; these bridges are implicated in subunit movement. Contacts the tRNAs in the A and P-sites. The chain is Small ribosomal subunit protein uS13 from Paraburkholderia phytofirmans (strain DSM 17436 / LMG 22146 / PsJN) (Burkholderia phytofirmans).